Here is a 202-residue protein sequence, read N- to C-terminus: Holliday junction resolvase RecU (202 aa).

The Mg(2+) site is built by Thr85, Asp87, Glu100, and Gln119.

The protein belongs to the RecU family. Mg(2+) is required as a cofactor.

It localises to the cytoplasm. It catalyses the reaction Endonucleolytic cleavage at a junction such as a reciprocal single-stranded crossover between two homologous DNA duplexes (Holliday junction).. Endonuclease that resolves Holliday junction intermediates in genetic recombination. Cleaves mobile four-strand junctions by introducing symmetrical nicks in paired strands. Promotes annealing of linear ssDNA with homologous dsDNA. Required for DNA repair, homologous recombination and chromosome segregation. The polypeptide is Holliday junction resolvase RecU (Streptococcus equi subsp. zooepidemicus (strain H70)).